Reading from the N-terminus, the 448-residue chain is N-succinylarginine dihydrolase (448 aa).

Residues 19–28, N110, and 137–138 contribute to the substrate site; these read AGLSSGNIAS and HR. E174 is a catalytic residue. R216 contacts substrate. H252 is an active-site residue. Substrate contacts are provided by D254 and N366. Residue C372 is the Nucleophile of the active site.

This sequence belongs to the succinylarginine dihydrolase family. In terms of assembly, homodimer.

The enzyme catalyses N(2)-succinyl-L-arginine + 2 H2O + 2 H(+) = N(2)-succinyl-L-ornithine + 2 NH4(+) + CO2. The protein operates within amino-acid degradation; L-arginine degradation via AST pathway; L-glutamate and succinate from L-arginine: step 2/5. Its function is as follows. Catalyzes the hydrolysis of N(2)-succinylarginine into N(2)-succinylornithine, ammonia and CO(2). This chain is N-succinylarginine dihydrolase, found in Legionella pneumophila (strain Corby).